The chain runs to 490 residues: Gram-negative bacteria-binding protein 3 (490 aa).

The signal sequence occupies residues 1-25 (MADALRFVAWSCCLQLLFLLLGVQG). In terms of domain architecture, CBM39 spans 26–126 (YEVPKAKIDV…GSFVVNGYSG (101 aa)). Residues 162-490 (TEVNGAPTRC…KIDYVKVYSL (329 aa)) enclose the GH16 domain. N-linked (GlcNAc...) asparagine glycans are attached at residues Asn362 and Asn373.

The protein belongs to the insect beta-1,3-glucan binding protein family.

It localises to the secreted. Its function is as follows. Involved in the recognition of invading microorganisms. Binds specifically to beta-1,3-glucan and activates the phenoloxidase cascade. This Drosophila melanogaster (Fruit fly) protein is Gram-negative bacteria-binding protein 3.